The chain runs to 357 residues: Probable glutamine amidotransferase DUG3 (357 aa).

Cys2 functions as the For GATase activity in the catalytic mechanism. Residues 2-260 enclose the Glutamine amidotransferase type-2 domain; sequence CRFLIFKGKQ…PGEYRVERLD (259 aa).

Belongs to the DUG3 family. In terms of assembly, component of the GSH degradosomal complex composed of at least DUG1, DUG2 and DUG3.

The protein resides in the cytoplasm. Component of the GSH degradosomal complex involved in the degradation of glutathione (GSH) and other peptides containing a gamma-glu-X bond. The protein is Probable glutamine amidotransferase DUG3 (DUG3) of Saccharomyces cerevisiae (strain ATCC 204508 / S288c) (Baker's yeast).